The primary structure comprises 167 residues: Crossover junction endodeoxyribonuclease RuvC (167 aa).

Catalysis depends on residues aspartate 7, glutamate 67, and aspartate 140. Aspartate 7, glutamate 67, and aspartate 140 together coordinate Mg(2+).

The protein belongs to the RuvC family. Homodimer which binds Holliday junction (HJ) DNA. The HJ becomes 2-fold symmetrical on binding to RuvC with unstacked arms; it has a different conformation from HJ DNA in complex with RuvA. In the full resolvosome a probable DNA-RuvA(4)-RuvB(12)-RuvC(2) complex forms which resolves the HJ. Requires Mg(2+) as cofactor.

Its subcellular location is the cytoplasm. The catalysed reaction is Endonucleolytic cleavage at a junction such as a reciprocal single-stranded crossover between two homologous DNA duplexes (Holliday junction).. In terms of biological role, the RuvA-RuvB-RuvC complex processes Holliday junction (HJ) DNA during genetic recombination and DNA repair. Endonuclease that resolves HJ intermediates. Cleaves cruciform DNA by making single-stranded nicks across the HJ at symmetrical positions within the homologous arms, yielding a 5'-phosphate and a 3'-hydroxyl group; requires a central core of homology in the junction. The consensus cleavage sequence is 5'-(A/T)TT(C/G)-3'. Cleavage occurs on the 3'-side of the TT dinucleotide at the point of strand exchange. HJ branch migration catalyzed by RuvA-RuvB allows RuvC to scan DNA until it finds its consensus sequence, where it cleaves and resolves the cruciform DNA. The protein is Crossover junction endodeoxyribonuclease RuvC of Moorella thermoacetica (strain ATCC 39073 / JCM 9320).